The sequence spans 310 residues: Ribonuclease Z (310 aa).

7 residues coordinate Zn(2+): histidine 64, histidine 66, aspartate 68, histidine 69, histidine 146, aspartate 215, and histidine 273. Aspartate 68 functions as the Proton acceptor in the catalytic mechanism.

Belongs to the RNase Z family. In terms of assembly, homodimer. It depends on Zn(2+) as a cofactor.

The catalysed reaction is Endonucleolytic cleavage of RNA, removing extra 3' nucleotides from tRNA precursor, generating 3' termini of tRNAs. A 3'-hydroxy group is left at the tRNA terminus and a 5'-phosphoryl group is left at the trailer molecule.. In terms of biological role, zinc phosphodiesterase, which displays some tRNA 3'-processing endonuclease activity. Probably involved in tRNA maturation, by removing a 3'-trailer from precursor tRNA. The protein is Ribonuclease Z of Aeropyrum pernix (strain ATCC 700893 / DSM 11879 / JCM 9820 / NBRC 100138 / K1).